A 305-amino-acid polypeptide reads, in one-letter code: Dermonecrotic toxin LiSicTox-betaID1 (305 aa).

A signal peptide spans Met1 to Gly18. The propeptide occupies Thr19–Arg26. Residue His38 is part of the active site. Residues Glu58 and Asp60 each contribute to the Mg(2+) site. His74 functions as the Nucleophile in the catalytic mechanism. 2 disulfide bridges follow: Cys78-Cys84 and Cys80-Cys223. Position 118 (Asp118) interacts with Mg(2+).

Belongs to the arthropod phospholipase D family. Class II subfamily. Class IIb sub-subfamily. Mg(2+) serves as cofactor. In terms of tissue distribution, expressed by the venom gland.

The protein resides in the secreted. The enzyme catalyses an N-(acyl)-sphingosylphosphocholine = an N-(acyl)-sphingosyl-1,3-cyclic phosphate + choline. It carries out the reaction an N-(acyl)-sphingosylphosphoethanolamine = an N-(acyl)-sphingosyl-1,3-cyclic phosphate + ethanolamine. The catalysed reaction is a 1-acyl-sn-glycero-3-phosphocholine = a 1-acyl-sn-glycero-2,3-cyclic phosphate + choline. It catalyses the reaction a 1-acyl-sn-glycero-3-phosphoethanolamine = a 1-acyl-sn-glycero-2,3-cyclic phosphate + ethanolamine. In terms of biological role, dermonecrotic toxins cleave the phosphodiester linkage between the phosphate and headgroup of certain phospholipids (sphingolipid and lysolipid substrates), forming an alcohol (often choline) and a cyclic phosphate. This toxin acts on sphingomyelin (SM) with low activity. It may also act on ceramide phosphoethanolamine (CPE), lysophosphatidylcholine (LPC) and lysophosphatidylethanolamine (LPE), but not on lysophosphatidylserine (LPS), and lysophosphatidylglycerol (LPG). It acts by transphosphatidylation, releasing exclusively cyclic phosphate products as second products. Has no or weak activities in inducing dermonecrosis, hemolysis, inflammatory response, platelet aggregation and increase in vessel permeability. In vivo, shows no lethality when injected at higher dose into mice. The polypeptide is Dermonecrotic toxin LiSicTox-betaID1 (Loxosceles intermedia (Brown spider)).